The primary structure comprises 1162 residues: DNA-directed RNA polymerase subunit beta (1162 aa).

Belongs to the RNA polymerase beta chain family. As to quaternary structure, the RNAP catalytic core consists of 2 alpha, 1 beta, 1 beta' and 1 omega subunit. When a sigma factor is associated with the core the holoenzyme is formed, which can initiate transcription.

The enzyme catalyses RNA(n) + a ribonucleoside 5'-triphosphate = RNA(n+1) + diphosphate. Its function is as follows. DNA-dependent RNA polymerase catalyzes the transcription of DNA into RNA using the four ribonucleoside triphosphates as substrates. The protein is DNA-directed RNA polymerase subunit beta of Clavibacter michiganensis subsp. michiganensis (strain NCPPB 382).